Here is a 202-residue protein sequence, read N- to C-terminus: MIGRLRGTLAEKQPPHLILDVNGLGYEVEVPMTTLYRLPSVGEPLTLHTHLVVREDAQLLYGFASKRERDFFRELIRLNGVGPKLALALMSSLEVDELVRCVQAQDTSALTKVPGVGKKTAERLLVELKDRFKAWEAVPSMFALVPNQPDAPAPVASAESDAVSALISLGYKPQEASKAVSAIKDKGLSSEDMIRRALKGMI.

A domain I region spans residues 1-64 (MIGRLRGTLA…EDAQLLYGFA (64 aa)). The tract at residues 65 to 143 (SKRERDFFRE…AWEAVPSMFA (79 aa)) is domain II. The tract at residues 144–154 (LVPNQPDAPAP) is flexible linker. The segment at 154 to 202 (PVASAESDAVSALISLGYKPQEASKAVSAIKDKGLSSEDMIRRALKGMI) is domain III.

The protein belongs to the RuvA family. Homotetramer. Forms an RuvA(8)-RuvB(12)-Holliday junction (HJ) complex. HJ DNA is sandwiched between 2 RuvA tetramers; dsDNA enters through RuvA and exits via RuvB. An RuvB hexamer assembles on each DNA strand where it exits the tetramer. Each RuvB hexamer is contacted by two RuvA subunits (via domain III) on 2 adjacent RuvB subunits; this complex drives branch migration. In the full resolvosome a probable DNA-RuvA(4)-RuvB(12)-RuvC(2) complex forms which resolves the HJ.

The protein resides in the cytoplasm. In terms of biological role, the RuvA-RuvB-RuvC complex processes Holliday junction (HJ) DNA during genetic recombination and DNA repair, while the RuvA-RuvB complex plays an important role in the rescue of blocked DNA replication forks via replication fork reversal (RFR). RuvA specifically binds to HJ cruciform DNA, conferring on it an open structure. The RuvB hexamer acts as an ATP-dependent pump, pulling dsDNA into and through the RuvAB complex. HJ branch migration allows RuvC to scan DNA until it finds its consensus sequence, where it cleaves and resolves the cruciform DNA. This chain is Holliday junction branch migration complex subunit RuvA, found in Pseudomonas fluorescens (strain ATCC BAA-477 / NRRL B-23932 / Pf-5).